A 600-amino-acid polypeptide reads, in one-letter code: Aspartate--tRNA(Asp/Asn) ligase (600 aa).

Residue glutamate 174 coordinates L-aspartate. An aspartate region spans residues glutamine 198–lysine 201. Arginine 220 contributes to the L-aspartate binding site. ATP is bound by residues arginine 220–glutamate 222 and glutamine 229. Histidine 457 contacts L-aspartate. ATP is bound at residue glutamate 491. Residue arginine 498 participates in L-aspartate binding. Glycine 543–arginine 546 provides a ligand contact to ATP.

The protein belongs to the class-II aminoacyl-tRNA synthetase family. Type 1 subfamily. Homodimer.

It is found in the cytoplasm. The enzyme catalyses tRNA(Asx) + L-aspartate + ATP = L-aspartyl-tRNA(Asx) + AMP + diphosphate. Functionally, aspartyl-tRNA synthetase with relaxed tRNA specificity since it is able to aspartylate not only its cognate tRNA(Asp) but also tRNA(Asn). Reaction proceeds in two steps: L-aspartate is first activated by ATP to form Asp-AMP and then transferred to the acceptor end of tRNA(Asp/Asn). This Burkholderia cenocepacia (strain ATCC BAA-245 / DSM 16553 / LMG 16656 / NCTC 13227 / J2315 / CF5610) (Burkholderia cepacia (strain J2315)) protein is Aspartate--tRNA(Asp/Asn) ligase.